Consider the following 136-residue polypeptide: Large ribosomal subunit protein uL16 (136 aa).

This sequence belongs to the universal ribosomal protein uL16 family. Part of the 50S ribosomal subunit.

In terms of biological role, binds 23S rRNA and is also seen to make contacts with the A and possibly P site tRNAs. This chain is Large ribosomal subunit protein uL16, found in Orientia tsutsugamushi (strain Boryong) (Rickettsia tsutsugamushi).